We begin with the raw amino-acid sequence, 218 residues long: Pyridoxine/pyridoxamine 5'-phosphate oxidase (218 aa).

Substrate-binding positions include 12–15 (RLSY) and Arg-70. Residues 65 to 70 (RTVLLR), 80 to 81 (YT), Lys-87, and Gln-109 contribute to the FMN site. Substrate-binding residues include Tyr-127, Arg-131, and Ser-135. Residues 145–146 (QS) and Trp-191 each bind FMN. 197–199 (RLH) contacts substrate. Arg-201 contributes to the FMN binding site.

It belongs to the pyridoxamine 5'-phosphate oxidase family. Homodimer. Requires FMN as cofactor.

The enzyme catalyses pyridoxamine 5'-phosphate + O2 + H2O = pyridoxal 5'-phosphate + H2O2 + NH4(+). It carries out the reaction pyridoxine 5'-phosphate + O2 = pyridoxal 5'-phosphate + H2O2. It participates in cofactor metabolism; pyridoxal 5'-phosphate salvage; pyridoxal 5'-phosphate from pyridoxamine 5'-phosphate: step 1/1. It functions in the pathway cofactor metabolism; pyridoxal 5'-phosphate salvage; pyridoxal 5'-phosphate from pyridoxine 5'-phosphate: step 1/1. Catalyzes the oxidation of either pyridoxine 5'-phosphate (PNP) or pyridoxamine 5'-phosphate (PMP) into pyridoxal 5'-phosphate (PLP). The chain is Pyridoxine/pyridoxamine 5'-phosphate oxidase from Acinetobacter baumannii (strain SDF).